The chain runs to 332 residues: Beta-ketoacyl-[acyl-carrier-protein] synthase III (332 aa).

Active-site residues include Cys114 and His255. The tract at residues 256–260 is ACP-binding; the sequence is QANLR. Residue Asn285 is part of the active site.

This sequence belongs to the thiolase-like superfamily. FabH family. As to quaternary structure, homodimer.

Its subcellular location is the cytoplasm. It carries out the reaction malonyl-[ACP] + acetyl-CoA + H(+) = 3-oxobutanoyl-[ACP] + CO2 + CoA. The protein operates within lipid metabolism; fatty acid biosynthesis. In terms of biological role, catalyzes the condensation reaction of fatty acid synthesis by the addition to an acyl acceptor of two carbons from malonyl-ACP. Catalyzes the first condensation reaction which initiates fatty acid synthesis and may therefore play a role in governing the total rate of fatty acid production. Possesses both acetoacetyl-ACP synthase and acetyl transacylase activities. Its substrate specificity determines the biosynthesis of branched-chain and/or straight-chain of fatty acids. The sequence is that of Beta-ketoacyl-[acyl-carrier-protein] synthase III from Sulfurimonas denitrificans (strain ATCC 33889 / DSM 1251) (Thiomicrospira denitrificans (strain ATCC 33889 / DSM 1251)).